Here is a 263-residue protein sequence, read N- to C-terminus: Endonuclease 8 (263 aa).

P2 (schiff-base intermediate with DNA) is an active-site residue. E3 (proton donor) is an active-site residue. Catalysis depends on K53, which acts as the Proton donor; for beta-elimination activity. Positions 70, 125, and 169 each coordinate DNA. The FPG-type zinc finger occupies 229 to 263; sequence KVFHRDGEPCERCGSIIEKTTLSSRPFYWCPGCQH. The Proton donor; for delta-elimination activity role is filled by R253.

Belongs to the FPG family. Zn(2+) serves as cofactor.

The enzyme catalyses 2'-deoxyribonucleotide-(2'-deoxyribose 5'-phosphate)-2'-deoxyribonucleotide-DNA = a 3'-end 2'-deoxyribonucleotide-(2,3-dehydro-2,3-deoxyribose 5'-phosphate)-DNA + a 5'-end 5'-phospho-2'-deoxyribonucleoside-DNA + H(+). In terms of biological role, involved in base excision repair of DNA damaged by oxidation or by mutagenic agents. Acts as a DNA glycosylase that recognizes and removes damaged bases. Has a preference for oxidized pyrimidines, such as thymine glycol, 5,6-dihydrouracil and 5,6-dihydrothymine. Has AP (apurinic/apyrimidinic) lyase activity and introduces nicks in the DNA strand. Cleaves the DNA backbone by beta-delta elimination to generate a single-strand break at the site of the removed base with both 3'- and 5'-phosphates. The chain is Endonuclease 8 from Escherichia coli (strain K12 / MC4100 / BW2952).